The sequence spans 227 residues: Adenylate kinase (227 aa).

21–26 serves as a coordination point for ATP; that stretch reads GAGKGT. Residues 41 to 70 form an NMP region; that stretch reads ATGDMLRSQVAKQTPLGIEAKKIMDDGKLV. Residues T42, R47, 68–70, 97–100, and Q104 contribute to the AMP site; these read KLV and GFPR. The LID stretch occupies residues 138–175; sequence GRLVHPASGRSYHKVFNPPKTEMKDDITGEDLVQRSDD. ATP is bound by residues R139 and 148 to 149; that span reads SY. AMP contacts are provided by R172 and R183. Q211 is a binding site for ATP.

This sequence belongs to the adenylate kinase family. AK2 subfamily. Monomer.

It localises to the cytoplasm. Its subcellular location is the cytosol. It is found in the mitochondrion intermembrane space. The catalysed reaction is AMP + ATP = 2 ADP. Its function is as follows. Catalyzes the reversible transfer of the terminal phosphate group between ATP and AMP. Plays an important role in cellular energy homeostasis and in adenine nucleotide metabolism. Adenylate kinase activity is critical for regulation of the phosphate utilization and the AMP de novo biosynthesis pathways. In Kluyveromyces lactis (strain ATCC 8585 / CBS 2359 / DSM 70799 / NBRC 1267 / NRRL Y-1140 / WM37) (Yeast), this protein is Adenylate kinase.